Here is a 241-residue protein sequence, read N- to C-terminus: tRNA (guanine-N(1)-)-methyltransferase (241 aa).

S-adenosyl-L-methionine contacts are provided by residues glycine 123 and isoleucine 143–leucine 148.

The protein belongs to the RNA methyltransferase TrmD family. In terms of assembly, homodimer.

It localises to the cytoplasm. The catalysed reaction is guanosine(37) in tRNA + S-adenosyl-L-methionine = N(1)-methylguanosine(37) in tRNA + S-adenosyl-L-homocysteine + H(+). In terms of biological role, specifically methylates guanosine-37 in various tRNAs. In Roseobacter denitrificans (strain ATCC 33942 / OCh 114) (Erythrobacter sp. (strain OCh 114)), this protein is tRNA (guanine-N(1)-)-methyltransferase.